A 93-amino-acid chain; its full sequence is Large ribosomal subunit protein uL23cy (93 aa).

It belongs to the universal ribosomal protein uL23 family. Part of the 50S ribosomal subunit.

The protein localises to the plastid. It is found in the chloroplast. Its function is as follows. Binds to 23S rRNA. The sequence is that of Large ribosomal subunit protein uL23cy (rpl23-B) from Agrostis stolonifera (Creeping bentgrass).